The sequence spans 203 residues: Cytochrome c biogenesis ATP-binding export protein CcmA (203 aa).

The region spanning leucine 2 to alanine 203 is the ABC transporter domain. An ATP-binding site is contributed by glycine 34–threonine 41.

This sequence belongs to the ABC transporter superfamily. CcmA exporter (TC 3.A.1.107) family. In terms of assembly, the complex is composed of two ATP-binding proteins (CcmA) and two transmembrane proteins (CcmB).

It localises to the cell inner membrane. The enzyme catalyses heme b(in) + ATP + H2O = heme b(out) + ADP + phosphate + H(+). Its function is as follows. Part of the ABC transporter complex CcmAB involved in the biogenesis of c-type cytochromes; once thought to export heme, this seems not to be the case, but its exact role is uncertain. Responsible for energy coupling to the transport system. In Pseudomonas aeruginosa, this protein is Cytochrome c biogenesis ATP-binding export protein CcmA.